The sequence spans 225 residues: Small ribosomal subunit protein uS3 (225 aa).

Positions 38 to 106 (LRGHLRKKLS…DVALNIVEIR (69 aa)) constitute a KH type-2 domain.

The protein belongs to the universal ribosomal protein uS3 family. As to quaternary structure, part of the 30S ribosomal subunit. Forms a tight complex with proteins S10 and S14.

Functionally, binds the lower part of the 30S subunit head. Binds mRNA in the 70S ribosome, positioning it for translation. This chain is Small ribosomal subunit protein uS3, found in Granulibacter bethesdensis (strain ATCC BAA-1260 / CGDNIH1).